Reading from the N-terminus, the 313-residue chain is Glutathionyl-hydroquinone reductase PcpF (313 aa).

C53 acts as the Nucleophile in catalysis. Glutathione is bound by residues W86, 119–122 (RVTI), and 137–138 (ES). One can recognise a GST C-terminal domain in the interval 161–285 (PAEFRPEIDR…INLRHAKAHY (125 aa)). The active-site Proton donor/acceptor is the Y184.

The protein belongs to the GST superfamily. Xi-class GSH transferase family. Homodimer.

The catalysed reaction is 2-(glutathione-S-yl)-hydroquinone + glutathione = hydroquinone + glutathione disulfide. Its function is as follows. Catalyzes glutathione (GSH)-dependent reduction of glutathionyl-hydroquinones (GS-HQs) to the corresponding hydroquinones. Can act on halogenated substrates such as GS-2,6-dichloro-p-hydroquinone (GS-DiCH) and GS-trichloro-p-hydroquinone (GS-TriCH). Involved in the degradation of pentachlorophenol (PCP), a toxic pollutant. This is Glutathionyl-hydroquinone reductase PcpF from Sphingobium chlorophenolicum.